Reading from the N-terminus, the 600-residue chain is Aspartate--tRNA(Asp/Asn) ligase (600 aa).

Glu187 is an L-aspartate binding site. Residues 211–214 (QIFK) form an aspartate region. L-aspartate-binding residues include Arg233 and His463. 233–235 (RDE) contacts ATP. Glu497 contributes to the ATP binding site. Arg504 contacts L-aspartate. An ATP-binding site is contributed by 549–552 (GVDR).

Belongs to the class-II aminoacyl-tRNA synthetase family. Type 1 subfamily. Homodimer.

The protein resides in the cytoplasm. The enzyme catalyses tRNA(Asx) + L-aspartate + ATP = L-aspartyl-tRNA(Asx) + AMP + diphosphate. In terms of biological role, aspartyl-tRNA synthetase with relaxed tRNA specificity since it is able to aspartylate not only its cognate tRNA(Asp) but also tRNA(Asn). Reaction proceeds in two steps: L-aspartate is first activated by ATP to form Asp-AMP and then transferred to the acceptor end of tRNA(Asp/Asn). The sequence is that of Aspartate--tRNA(Asp/Asn) ligase from Wolbachia pipientis subsp. Culex pipiens (strain wPip).